The primary structure comprises 351 residues: N-acetyl-gamma-glutamyl-phosphate reductase (351 aa).

Cysteine 154 is a catalytic residue.

It belongs to the NAGSA dehydrogenase family. Type 1 subfamily.

Its subcellular location is the cytoplasm. It carries out the reaction N-acetyl-L-glutamate 5-semialdehyde + phosphate + NADP(+) = N-acetyl-L-glutamyl 5-phosphate + NADPH + H(+). The protein operates within amino-acid biosynthesis; L-arginine biosynthesis; N(2)-acetyl-L-ornithine from L-glutamate: step 3/4. In terms of biological role, catalyzes the NADPH-dependent reduction of N-acetyl-5-glutamyl phosphate to yield N-acetyl-L-glutamate 5-semialdehyde. This Prochlorococcus marinus subsp. pastoris (strain CCMP1986 / NIES-2087 / MED4) protein is N-acetyl-gamma-glutamyl-phosphate reductase.